A 508-amino-acid chain; its full sequence is Protoporphyrinogen oxidase 2, chloroplastic/mitochondrial (508 aa).

Residues 1-22 (MASGAVADHQIEAVSGKRVAVV) constitute a chloroplast and mitochondrion transit peptide. FAD is bound by residues 23–28 (GAGVSG), 46–47 (EA), and 68–71 (GANT). The tract at residues 219–239 (KGGKSRDTKSSPGTKKGSRGS) is disordered. FAD contacts are provided by residues Val268 and 475 to 477 (LSV).

Belongs to the protoporphyrinogen/coproporphyrinogen oxidase family. Protoporphyrinogen oxidase subfamily. FAD serves as cofactor.

The protein resides in the plastid. It localises to the chloroplast. It is found in the mitochondrion. The catalysed reaction is protoporphyrinogen IX + 3 O2 = protoporphyrin IX + 3 H2O2. It participates in porphyrin-containing compound metabolism; protoporphyrin-IX biosynthesis; protoporphyrin-IX from protoporphyrinogen-IX: step 1/1. It functions in the pathway porphyrin-containing compound metabolism; chlorophyll biosynthesis. In terms of biological role, catalyzes the 6-electron oxidation of protoporphyrinogen-IX to form protoporphyrin-IX. The polypeptide is Protoporphyrinogen oxidase 2, chloroplastic/mitochondrial (PPOX2) (Arabidopsis thaliana (Mouse-ear cress)).